The sequence spans 532 residues: Probable calcium-binding mitochondrial carrier CBG00135 (532 aa).

4 EF-hand domains span residues 70 to 105 (EKEK…QTPH), 107 to 136 (PATM…NYVI), 137 to 172 (AHEA…MGVN), and 173 to 208 (LDDH…YPST). Ca(2+) is bound by residues aspartate 83, aspartate 85, aspartate 87, serine 89, and aspartate 94. Residues aspartate 150, asparagine 152, aspartate 154, glutamate 156, and glutamate 161 each contribute to the Ca(2+) site. Solcar repeat units lie at residues 243-329 (GVWW…IKRW), 339-425 (LTTY…LKSC), and 436-526 (PGVL…VRKQ). Transmembrane regions (helical) follow at residues 249-266 (LVAG…TAPF), 304-323 (GNGI…FMSY), 349-362 (SSAG…IYPM), 400-419 (GYLP…LTVY), 442-459 (LACG…SYPL), and 501-518 (GITP…ISYV).

This sequence belongs to the mitochondrial carrier (TC 2.A.29) family.

The protein resides in the mitochondrion inner membrane. Its function is as follows. Calcium-dependent mitochondrial solute carrier. This is Probable calcium-binding mitochondrial carrier CBG00135 from Caenorhabditis briggsae.